A 260-amino-acid chain; its full sequence is Cytosolic Fe-S cluster assembly factor Nubp2 homolog 2 (260 aa).

Residue 14–21 (GKGGVGKS) participates in ATP binding. [4Fe-4S] cluster is bound by residues Cys-188 and Cys-191.

Belongs to the Mrp/NBP35 ATP-binding proteins family. NUBP2/CFD1 subfamily. In terms of assembly, heterotetramer of 2 Nubp1 and 2 Nubp2 chains. It depends on [4Fe-4S] cluster as a cofactor.

The protein resides in the cytoplasm. Its function is as follows. Component of the cytosolic iron-sulfur (Fe/S) protein assembly (CIA) machinery. Required for maturation of extramitochondrial Fe-S proteins. The Nubp1-Nubp2 heterotetramer forms a Fe-S scaffold complex, mediating the de novo assembly of an Fe-S cluster and its transfer to target apoproteins. The polypeptide is Cytosolic Fe-S cluster assembly factor Nubp2 homolog 2 (Drosophila yakuba (Fruit fly)).